The following is a 183-amino-acid chain: Peptide deformylase (183 aa).

Cys-110 and His-153 together coordinate Fe cation. Residue Glu-154 is part of the active site. His-157 contributes to the Fe cation binding site.

The protein belongs to the polypeptide deformylase family. The cofactor is Fe(2+).

It carries out the reaction N-terminal N-formyl-L-methionyl-[peptide] + H2O = N-terminal L-methionyl-[peptide] + formate. Functionally, removes the formyl group from the N-terminal Met of newly synthesized proteins. Requires at least a dipeptide for an efficient rate of reaction. N-terminal L-methionine is a prerequisite for activity but the enzyme has broad specificity at other positions. This chain is Peptide deformylase, found in Listeria monocytogenes serotype 4b (strain CLIP80459).